The following is a 149-amino-acid chain: Large ribosomal subunit protein uL15 (149 aa).

2 stretches are compositionally biased toward basic residues: residues 1 to 13 (MPTR…KHRG) and 21 to 42 (RIGK…HHHR). Positions 1–44 (MPTRLTKTRKHRGNVSAGKGRIGKHRKHPGGRGKAGGQHHHRTN) are disordered.

It belongs to the universal ribosomal protein uL15 family. Component of the large ribosomal subunit. Mature ribosomes consist of a small (40S) and a large (60S) subunit. The 40S subunit contains about 32 different proteins and 1 molecule of RNA (18S). The 60S subunit contains 45 different proteins and 3 molecules of RNA (25S, 5.8S and 5S).

It is found in the cytoplasm. Component of the ribosome, a large ribonucleoprotein complex responsible for the synthesis of proteins in the cell. The small ribosomal subunit (SSU) binds messenger RNAs (mRNAs) and translates the encoded message by selecting cognate aminoacyl-transfer RNA (tRNA) molecules. The large subunit (LSU) contains the ribosomal catalytic site termed the peptidyl transferase center (PTC), which catalyzes the formation of peptide bonds, thereby polymerizing the amino acids delivered by tRNAs into a polypeptide chain. The nascent polypeptides leave the ribosome through a tunnel in the LSU and interact with protein factors that function in enzymatic processing, targeting, and the membrane insertion of nascent chains at the exit of the ribosomal tunnel. The protein is Large ribosomal subunit protein uL15 of Candida albicans (strain SC5314 / ATCC MYA-2876) (Yeast).